A 349-amino-acid polypeptide reads, in one-letter code: Histidinol-phosphate aminotransferase 1 (349 aa).

Lysine 213 bears the N6-(pyridoxal phosphate)lysine mark.

This sequence belongs to the class-II pyridoxal-phosphate-dependent aminotransferase family. Histidinol-phosphate aminotransferase subfamily. In terms of assembly, homodimer. It depends on pyridoxal 5'-phosphate as a cofactor.

It carries out the reaction L-histidinol phosphate + 2-oxoglutarate = 3-(imidazol-4-yl)-2-oxopropyl phosphate + L-glutamate. The protein operates within amino-acid biosynthesis; L-histidine biosynthesis; L-histidine from 5-phospho-alpha-D-ribose 1-diphosphate: step 7/9. The polypeptide is Histidinol-phosphate aminotransferase 1 (Carboxydothermus hydrogenoformans (strain ATCC BAA-161 / DSM 6008 / Z-2901)).